A 399-amino-acid chain; its full sequence is Argininosuccinate synthase (399 aa).

Residue 9 to 17 coordinates ATP; it reads AYSGGLDTS. An L-citrulline-binding site is contributed by tyrosine 85. Glycine 115 provides a ligand contact to ATP. L-aspartate is bound by residues threonine 117, asparagine 121, and aspartate 122. Residue asparagine 121 coordinates L-citrulline. L-citrulline-binding residues include arginine 125, serine 173, glutamate 258, and tyrosine 270.

Belongs to the argininosuccinate synthase family. Type 1 subfamily. Homotetramer.

The protein resides in the cytoplasm. The catalysed reaction is L-citrulline + L-aspartate + ATP = 2-(N(omega)-L-arginino)succinate + AMP + diphosphate + H(+). It functions in the pathway amino-acid biosynthesis; L-arginine biosynthesis; L-arginine from L-ornithine and carbamoyl phosphate: step 2/3. In Streptococcus uberis (strain ATCC BAA-854 / 0140J), this protein is Argininosuccinate synthase.